Here is a 155-residue protein sequence, read N- to C-terminus: Small ribosomal subunit protein uS9 (155 aa).

It belongs to the universal ribosomal protein uS9 family.

The polypeptide is Small ribosomal subunit protein uS9 (Sinorhizobium medicae (strain WSM419) (Ensifer medicae)).